Consider the following 111-residue polypeptide: Large ribosomal subunit protein eL30 (111 aa).

The protein belongs to the eukaryotic ribosomal protein eL30 family.

This chain is Large ribosomal subunit protein eL30 (RPL30), found in Oryza sativa subsp. japonica (Rice).